The sequence spans 558 residues: Eukaryotic translation initiation factor 3 subunit D (558 aa).

Positions E296–P310 are RNA gate. The tract at residues D534–R558 is disordered. Residues F537–Q551 are compositionally biased toward acidic residues.

Belongs to the eIF-3 subunit D family. Component of the eukaryotic translation initiation factor 3 (eIF-3) complex.

The protein localises to the cytoplasm. MRNA cap-binding component of the eukaryotic translation initiation factor 3 (eIF-3) complex, which is involved in protein synthesis of a specialized repertoire of mRNAs and, together with other initiation factors, stimulates binding of mRNA and methionyl-tRNAi to the 40S ribosome. The eIF-3 complex specifically targets and initiates translation of a subset of mRNAs involved in cell proliferation. In the eIF-3 complex, eif3d specifically recognizes and binds the 7-methylguanosine cap of a subset of mRNAs. The protein is Eukaryotic translation initiation factor 3 subunit D of Nasonia vitripennis (Parasitic wasp).